We begin with the raw amino-acid sequence, 157 residues long: Putative glutathione-dependent formaldehyde-activating enzyme (157 aa).

The 132-residue stretch at 3–134 (LEGSCHCGAV…WVEIESREQD (132 aa)) folds into the CENP-V/GFA domain. Positions 7, 9, 27, 29, 32, 79, and 82 each coordinate Zn(2+).

This sequence belongs to the Gfa family. Zn(2+) is required as a cofactor.

The enzyme catalyses S-(hydroxymethyl)glutathione = glutathione + formaldehyde. It functions in the pathway one-carbon metabolism; formaldehyde degradation; formate from formaldehyde (glutathione route): step 1/3. In terms of biological role, catalyzes the condensation of formaldehyde and glutathione to S-hydroxymethylglutathione. In Halomonas elongata (strain ATCC 33173 / DSM 2581 / NBRC 15536 / NCIMB 2198 / 1H9), this protein is Putative glutathione-dependent formaldehyde-activating enzyme.